A 1447-amino-acid chain; its full sequence is Inositol 1,4,5-triphosphate receptor associated 2 (1447 aa).

The Cytoplasmic portion of the chain corresponds to 1-1388 (MDVGVTPRRH…RPAVSRGARG (1388 aa)). Disordered regions lie at residues 64–96 (VRPD…PRAP) and 420–439 (LSLT…RKQM). Residues 71-92 (SASSAGMLTPTASPGPGSSCNT) show a composition bias toward polar residues. 2 coiled-coil regions span residues 354 to 518 (FCVA…EYSS) and 665 to 731 (TDWI…DNRE). A compositionally biased stretch (low complexity) spans 420 to 436 (LSLTSSEESRAQAAAQR). Disordered regions lie at residues 790 to 828 (KQEE…EEPQ), 841 to 860 (KKSE…GEQR), 991 to 1132 (PVAE…SPSD), 1267 to 1289 (NERS…TTSN), and 1355 to 1379 (DEPT…MEGR). Basic and acidic residues predominate over residues 800-812 (VSDKEKITAKSEG). Polar residues predominate over residues 1021–1035 (KKTVVTSDSNSTGSA). Basic and acidic residues-rich tracts occupy residues 1037–1049 (SLKD…KDMT) and 1080–1096 (KKEM…KAQE). The segment at 1076–1265 (RNKLKKEMSS…ELLELRENLT (190 aa)) is necessary for spindle and spindle pole localization. A compositionally biased stretch (polar residues) spans 1110-1119 (TSVSSENASD). A compositionally biased stretch (basic and acidic residues) spans 1120–1132 (STKDDKNSLSPSD). Positions 1359 to 1371 (LMNSPTPSPTDNA) are enriched in polar residues. Residues 1388–1447 (GIWIWVALFVVLAVLLALLASLMLQPAVDAAPVGTGDSWMTIQQLLWPYTGLRHNGQPPV) are necessary for nuclear membrane localization. The helical; Anchor for type IV membrane protein transmembrane segment at 1389-1409 (IWIWVALFVVLAVLLALLASL) threads the bilayer. The Lumenal portion of the chain corresponds to 1410–1447 (MLQPAVDAAPVGTGDSWMTIQQLLWPYTGLRHNGQPPV).

It belongs to the IRAG2 family.

It is found in the endoplasmic reticulum membrane. It localises to the nucleus envelope. The protein resides in the cytoplasm. The protein localises to the cytoskeleton. Its subcellular location is the microtubule organizing center. It is found in the centrosome. It localises to the spindle pole. The protein resides in the chromosome. A maternally expressed membrane and cytoskeletal linker protein, which is essential for attachment of the centrosome to the male pronucleus. Promotes male and female pronucleus congression and subsequent fusion after fertilization. Congression is mediated by the sperm aster microtubules. The sequence is that of Inositol 1,4,5-triphosphate receptor associated 2 (irag2) from Danio rerio (Zebrafish).